The following is a 217-amino-acid chain: LexA repressor (217 aa).

Positions 28–48 (RAEIAAEFGFSSPNAAEEHLR) form a DNA-binding region, H-T-H motif. Catalysis depends on for autocatalytic cleavage activity residues serine 136 and lysine 173.

Belongs to the peptidase S24 family. In terms of assembly, homodimer.

It carries out the reaction Hydrolysis of Ala-|-Gly bond in repressor LexA.. In terms of biological role, represses a number of genes involved in the response to DNA damage (SOS response), including recA and lexA. In the presence of single-stranded DNA, RecA interacts with LexA causing an autocatalytic cleavage which disrupts the DNA-binding part of LexA, leading to derepression of the SOS regulon and eventually DNA repair. This is LexA repressor from Cupriavidus necator (strain ATCC 17699 / DSM 428 / KCTC 22496 / NCIMB 10442 / H16 / Stanier 337) (Ralstonia eutropha).